A 362-amino-acid chain; its full sequence is NAD(P)H-quinone oxidoreductase subunit 1, chloroplastic (362 aa).

8 helical membrane-spanning segments follow: residues Ile29–Leu49, Ile103–Leu123, Ile128–Gly148, Ala164–Leu184, Phe202–Leu222, Tyr247–Ser267, Thr303–Ile323, and Leu335–Thr355.

This sequence belongs to the complex I subunit 1 family. In terms of assembly, NDH is composed of at least 16 different subunits, 5 of which are encoded in the nucleus.

It localises to the plastid. The protein localises to the chloroplast thylakoid membrane. The catalysed reaction is a plastoquinone + NADH + (n+1) H(+)(in) = a plastoquinol + NAD(+) + n H(+)(out). It carries out the reaction a plastoquinone + NADPH + (n+1) H(+)(in) = a plastoquinol + NADP(+) + n H(+)(out). In terms of biological role, NDH shuttles electrons from NAD(P)H:plastoquinone, via FMN and iron-sulfur (Fe-S) centers, to quinones in the photosynthetic chain and possibly in a chloroplast respiratory chain. The immediate electron acceptor for the enzyme in this species is believed to be plastoquinone. Couples the redox reaction to proton translocation, and thus conserves the redox energy in a proton gradient. This chain is NAD(P)H-quinone oxidoreductase subunit 1, chloroplastic, found in Agrostis stolonifera (Creeping bentgrass).